The following is a 432-amino-acid chain: Serine--tRNA ligase (432 aa).

239–241 is an L-serine binding site; sequence TSE. Residue 270–272 coordinates ATP; the sequence is RSE. Glu-293 serves as a coordination point for L-serine. 357–360 contacts ATP; the sequence is EISS. Ser-392 serves as a coordination point for L-serine.

The protein belongs to the class-II aminoacyl-tRNA synthetase family. Type-1 seryl-tRNA synthetase subfamily. Homodimer. The tRNA molecule binds across the dimer.

Its subcellular location is the cytoplasm. The catalysed reaction is tRNA(Ser) + L-serine + ATP = L-seryl-tRNA(Ser) + AMP + diphosphate + H(+). The enzyme catalyses tRNA(Sec) + L-serine + ATP = L-seryl-tRNA(Sec) + AMP + diphosphate + H(+). Its pathway is aminoacyl-tRNA biosynthesis; selenocysteinyl-tRNA(Sec) biosynthesis; L-seryl-tRNA(Sec) from L-serine and tRNA(Sec): step 1/1. In terms of biological role, catalyzes the attachment of serine to tRNA(Ser). Is also able to aminoacylate tRNA(Sec) with serine, to form the misacylated tRNA L-seryl-tRNA(Sec), which will be further converted into selenocysteinyl-tRNA(Sec). This chain is Serine--tRNA ligase, found in Methylibium petroleiphilum (strain ATCC BAA-1232 / LMG 22953 / PM1).